The following is a 359-amino-acid chain: Alpha-2-HS-glycoprotein (359 aa).

A signal peptide spans 1–18 (MKSFVLLFCLAQLWGCHS). In terms of domain architecture, Cystatin fetuin-A-type 1 spans 27–133 (YKEPACDDPD…QFSVLFTKCD (107 aa)). 6 disulfides stabilise this stretch: cysteine 32-cysteine 350, cysteine 89-cysteine 100, cysteine 114-cysteine 132, cysteine 146-cysteine 149, cysteine 208-cysteine 219, and cysteine 230-cysteine 248. An N-linked (GlcNAc...) asparagine glycan is attached at asparagine 99. Phosphoserine is present on residues serine 134, serine 135, and serine 138. The Cystatin fetuin-A-type 2 domain maps to 144 to 256 (KLCPDCPLLA…TCTLFQTQPV (113 aa)). 2 N-linked (GlcNAc...) asparagine glycosylation sites follow: asparagine 156 and asparagine 176. The segment at 257–285 (IPQPQPDGAEAEAPSAVPDAAGPTPSAAG) is disordered. An O-linked (GalNAc...) serine glycan is attached at serine 271. Residues 276 to 285 (AAGPTPSAAG) show a composition bias toward low complexity. Threonine 280 carries an O-linked (GalNAc...) threonine glycan. 2 O-linked (GalNAc...) serine glycosylation sites follow: serine 282 and serine 296. A Phosphothreonine modification is found at threonine 314. Phosphoserine is present on residues serine 316, serine 320, serine 323, and serine 325. Threonine 334 is a glycosylation site (O-linked (GalNAc...) threonine). A glycan (O-linked (GalNAc...) serine; partial) is linked at serine 341.

This sequence belongs to the fetuin family. Post-translationally, phosphorylated by FAM20C in the extracellular medium. As to expression, liver and bone.

The protein localises to the secreted. Its function is as follows. Promotes endocytosis, possesses opsonic properties and influences the mineral phase of bone. Suggested to have lymphocyte stimulating properties, lipid binding capability and to bind thyroid hormone. This is Alpha-2-HS-glycoprotein (AHSG) from Bos taurus (Bovine).